A 645-amino-acid polypeptide reads, in one-letter code: Threonine--tRNA ligase (645 aa).

Positions 1-63 constitute a TGS domain; it reads MNQINIQFPD…EQDGAIEIIT (63 aa). Residues 242-540 form a catalytic region; that stretch reads DHRKIGKDLE…LTEETKGAFP (299 aa). Zn(2+) contacts are provided by C336, H387, and H517.

Belongs to the class-II aminoacyl-tRNA synthetase family. As to quaternary structure, homodimer. The cofactor is Zn(2+).

The protein localises to the cytoplasm. It carries out the reaction tRNA(Thr) + L-threonine + ATP = L-threonyl-tRNA(Thr) + AMP + diphosphate + H(+). Its function is as follows. Catalyzes the attachment of threonine to tRNA(Thr) in a two-step reaction: L-threonine is first activated by ATP to form Thr-AMP and then transferred to the acceptor end of tRNA(Thr). Also edits incorrectly charged L-seryl-tRNA(Thr). This chain is Threonine--tRNA ligase, found in Staphylococcus epidermidis (strain ATCC 35984 / DSM 28319 / BCRC 17069 / CCUG 31568 / BM 3577 / RP62A).